The primary structure comprises 191 residues: NF-kappa-B inhibitor-interacting Ras-like protein 2 (191 aa).

A small GTPase-like region spans residues 1 to 191 (MGKSCKVVVC…KNKGSGSLDG (191 aa)). Residue 11–18 (GQASVGKT) participates in GTP binding. The Effector region signature appears at 35–43 (MIETQEDIY). GTP-binding positions include 61-65 (DTRGL) and 120-123 (NKCD). The interval 169 to 191 (TQPQSKSAFPLSRKNKGSGSLDG) is disordered.

This sequence belongs to the small GTPase superfamily. Ras family. KappaB-Ras subfamily. As to quaternary structure, interacts with both NF-kappa-B inhibitor alpha (NFKBIA) and beta (NFKBIB) in vitro. However, it probably only interacts with NFKBIB in vivo. Interacts with GFOD1. In terms of tissue distribution, widely expressed.

The protein resides in the cytoplasm. Its function is as follows. Atypical Ras-like protein that acts as a potent regulator of NF-kappa-B activity by preventing the degradation of NF-kappa-B inhibitor beta (NFKBIB) by most signals, explaining why NFKBIB is more resistant to degradation. May act by blocking phosphorylation of NFKBIB and nuclear localization of p65/RELA NF-kappa-B subunit. It is unclear whether it acts as a GTPase. Both GTP- and GDP-bound forms block phosphorylation of NFKBIB. This chain is NF-kappa-B inhibitor-interacting Ras-like protein 2 (NKIRAS2), found in Homo sapiens (Human).